The following is a 532-amino-acid chain: Arginine--tRNA ligase (532 aa).

Positions 122–132 match the 'HIGH' region motif; sequence ANPTGPLHVAS.

Belongs to the class-I aminoacyl-tRNA synthetase family. As to quaternary structure, monomer.

It localises to the cytoplasm. The enzyme catalyses tRNA(Arg) + L-arginine + ATP = L-arginyl-tRNA(Arg) + AMP + diphosphate. This chain is Arginine--tRNA ligase, found in Elusimicrobium minutum (strain Pei191).